Here is a 700-residue protein sequence, read N- to C-terminus: Methionine--tRNA ligase (700 aa).

The short motif at 13–23 (PYANGDIHLGH) is the 'HIGH' region element. The Zn(2+) site is built by Cys-144, Cys-147, Cys-157, and Cys-160. The 'KMSKS' region motif lies at 341–345 (KMSKS). ATP is bound at residue Lys-344. Residues 562–587 (QVGAPTASQDDKAAAKNTSPAAMPSS) form a disordered region. Polar residues predominate over residues 577–587 (KNTSPAAMPSS). In terms of domain architecture, tRNA-binding spans 598 to 700 (DFAKVEMKVA…DEAVIGDSLA (103 aa)).

This sequence belongs to the class-I aminoacyl-tRNA synthetase family. MetG type 1 subfamily. Homodimer. Zn(2+) is required as a cofactor.

Its subcellular location is the cytoplasm. The catalysed reaction is tRNA(Met) + L-methionine + ATP = L-methionyl-tRNA(Met) + AMP + diphosphate. Is required not only for elongation of protein synthesis but also for the initiation of all mRNA translation through initiator tRNA(fMet) aminoacylation. This Psychrobacter cryohalolentis (strain ATCC BAA-1226 / DSM 17306 / VKM B-2378 / K5) protein is Methionine--tRNA ligase.